A 281-amino-acid chain; its full sequence is MKDKIFIFLQYIIPHSLTSRLVSKLAESKNKHLKNYLINLAIKKFKIDISEAKETDINKYTSFNNFFIRELKDGLRPISSDKKIISSPADGVLSEFGDITNGSLVQAKGKTFTLKALIADSSTTDFTKFATIYLSPKDYHRVHMPIDGKLTKMVYIPGKLFSVNKVTAQNVDDLFAKNERLVCYFKTEIGEVAVIFVGALLVAGIETVWHGKVAPNYYKDIQIWNYDNDSFNIEFKKGDTLGWFNFGSTVIILMPNNNISFKYNQSNANISVNQDLALIAE.

Catalysis depends on charge relay system; for autoendoproteolytic cleavage activity residues aspartate 90, histidine 143, and serine 248. Serine 248 serves as the catalytic Schiff-base intermediate with substrate; via pyruvic acid; for decarboxylase activity. Serine 248 carries the post-translational modification Pyruvic acid (Ser); by autocatalysis.

The protein belongs to the phosphatidylserine decarboxylase family. PSD-B subfamily. Prokaryotic type I sub-subfamily. As to quaternary structure, heterodimer of a large membrane-associated beta subunit and a small pyruvoyl-containing alpha subunit. Pyruvate is required as a cofactor. Is synthesized initially as an inactive proenzyme. Formation of the active enzyme involves a self-maturation process in which the active site pyruvoyl group is generated from an internal serine residue via an autocatalytic post-translational modification. Two non-identical subunits are generated from the proenzyme in this reaction, and the pyruvate is formed at the N-terminus of the alpha chain, which is derived from the carboxyl end of the proenzyme. The autoendoproteolytic cleavage occurs by a canonical serine protease mechanism, in which the side chain hydroxyl group of the serine supplies its oxygen atom to form the C-terminus of the beta chain, while the remainder of the serine residue undergoes an oxidative deamination to produce ammonia and the pyruvoyl prosthetic group on the alpha chain. During this reaction, the Ser that is part of the protease active site of the proenzyme becomes the pyruvoyl prosthetic group, which constitutes an essential element of the active site of the mature decarboxylase.

It is found in the cell membrane. It catalyses the reaction a 1,2-diacyl-sn-glycero-3-phospho-L-serine + H(+) = a 1,2-diacyl-sn-glycero-3-phosphoethanolamine + CO2. The protein operates within phospholipid metabolism; phosphatidylethanolamine biosynthesis; phosphatidylethanolamine from CDP-diacylglycerol: step 2/2. Its function is as follows. Catalyzes the formation of phosphatidylethanolamine (PtdEtn) from phosphatidylserine (PtdSer). In Francisella philomiragia subsp. philomiragia (strain ATCC 25017 / CCUG 19701 / FSC 153 / O#319-036), this protein is Phosphatidylserine decarboxylase proenzyme.